A 235-amino-acid chain; its full sequence is Small ribosomal subunit protein eS4 (235 aa).

Residues 43–114 (IPLLLIVRDM…DPHRFLRLIE (72 aa)) enclose the S4 RNA-binding domain.

It belongs to the eukaryotic ribosomal protein eS4 family.

In Korarchaeum cryptofilum (strain OPF8), this protein is Small ribosomal subunit protein eS4.